A 135-amino-acid chain; its full sequence is ATP synthase epsilon chain (135 aa).

A disordered region spans residues Glu91 to Phe122.

It belongs to the ATPase epsilon chain family. In terms of assembly, F-type ATPases have 2 components, CF(1) - the catalytic core - and CF(0) - the membrane proton channel. CF(1) has five subunits: alpha(3), beta(3), gamma(1), delta(1), epsilon(1). CF(0) has three main subunits: a, b and c.

It localises to the cellular thylakoid membrane. Functionally, produces ATP from ADP in the presence of a proton gradient across the membrane. This Synechococcus sp. (strain RCC307) protein is ATP synthase epsilon chain.